The sequence spans 313 residues: Porphobilinogen deaminase (313 aa).

An S-(dipyrrolylmethanemethyl)cysteine modification is found at Cys242.

It belongs to the HMBS family. Monomer. The cofactor is dipyrromethane.

The enzyme catalyses 4 porphobilinogen + H2O = hydroxymethylbilane + 4 NH4(+). It functions in the pathway porphyrin-containing compound metabolism; protoporphyrin-IX biosynthesis; coproporphyrinogen-III from 5-aminolevulinate: step 2/4. In terms of biological role, tetrapolymerization of the monopyrrole PBG into the hydroxymethylbilane pre-uroporphyrinogen in several discrete steps. The protein is Porphobilinogen deaminase of Yersinia pseudotuberculosis serotype O:3 (strain YPIII).